We begin with the raw amino-acid sequence, 193 residues long: uncharacterized protein (193 aa).

Position 8 (arginine 8) interacts with substrate. Residue histidine 9 is the Tele-phosphohistidine intermediate of the active site. The substrate site is built by asparagine 15, glutamine 21, and arginine 58. Glutamate 82 (proton donor/acceptor) is an active-site residue. Histidine 139 contacts substrate.

This sequence belongs to the phosphoglycerate mutase family. GpmB subfamily.

In terms of biological role, phosphatase with broad substrate specificity. Does not have phosphoglycerate mutase activity. This is an uncharacterized protein from Bacillus subtilis (strain 168).